Reading from the N-terminus, the 1025-residue chain is Beta-galactosidase (1025 aa).

Asparagine 103 and aspartate 202 together coordinate substrate. A Na(+)-binding site is contributed by aspartate 202. Positions 417, 419, and 462 each coordinate Mg(2+). Substrate contacts are provided by residues glutamate 462 and 538 to 541 (EYAH). Residue glutamate 462 is the Proton donor of the active site. Catalysis depends on glutamate 538, which acts as the Nucleophile. Position 598 (asparagine 598) interacts with Mg(2+). Positions 602 and 605 each coordinate Na(+). 2 residues coordinate substrate: asparagine 605 and tryptophan 1003.

Belongs to the glycosyl hydrolase 2 family. Homotetramer. It depends on Mg(2+) as a cofactor. Requires Na(+) as cofactor.

It catalyses the reaction Hydrolysis of terminal non-reducing beta-D-galactose residues in beta-D-galactosides.. The sequence is that of Beta-galactosidase from Citrobacter koseri (strain ATCC BAA-895 / CDC 4225-83 / SGSC4696).